A 1254-amino-acid chain; its full sequence is Structural polyprotein (1254 aa).

Positions 1 to 33 (MFPFQPMYPMQPMPYRNPFAAPRRPWFPRTDPF) are necessary for nucleocapsid assembly and virus assembly. Positions 33–68 (FLAMQVQELTRSMANLTFKQRRDAPPEGPSAKKPKK) are host transcription inhibition. The short motif at 41 to 48 (LTRSMANL) is the Supraphysiological nuclear export signal element. The disordered stretch occupies residues 45 to 119 (MANLTFKQRR…KKPGKRQRMV (75 aa)). The Nuclear localization signal motif lies at 64-68 (KKPKK). Positions 80-92 (GKKKKNQGKKKAK) are enriched in basic residues. The tract at residues 91–127 (AKTGPPNPKAQNGNKKKTNKKPGKRQRMVMKLESDKT) is binding to the viral RNA. 2 positions are modified to phosphothreonine: T93 and T108. Basic residues predominate over residues 104-118 (NKKKTNKKPGKRQRM). The interval 112-126 (PGKRQRMVMKLESDK) is ribosome-binding. S124 carries the phosphoserine modification. The 150-residue stretch at 126 to 275 (KTFPIMLEGK…KYTPENCEQW (150 aa)) folds into the Peptidase S3 domain. At T127 the chain carries Phosphothreonine. Catalysis depends on charge relay system residues H152, D174, and S226. Positions 276–287 (SLVTTMCLLANV) are functions as an uncleaved signal peptide for the precursor of protein E3/E2. Residues 276–701 (SLVTTMCLLA…HYYHRYPMST (426 aa)) are Extracellular-facing. N-linked (GlcNAc...) asparagine; by host glycans are attached at residues N286, N546, and N652. A helical membrane pass occupies residues 702-722 (ILGLSICAAIATVSVAASTWL). At 723–757 (FCRSRVACLTPYRLTPNARIPFCLAVLCCARTARA) the chain is on the cytoplasmic side. 3 S-palmitoyl cysteine; by host lipidation sites follow: C730, C750, and C751. The segment at 730–750 (CLTPYRLTPNARIPFCLAVLC) is transient transmembrane before p62-6K protein processing. Residues 758–772 (ETTWESLDHLWNNNQ) are Extracellular-facing. Residues 773 to 793 (QMFWIQLLIPLAALIVVTRLL) traverse the membrane as a helical segment. Residues 794–795 (RC) lie on the Cytoplasmic side of the membrane. The helical transmembrane segment at 796–816 (VCCVVPFLVMAGAAAGAYEHA) threads the bilayer. The Extracellular segment spans residues 817-1224 (TTMPSQAGIS…SKTAWTWLTS (408 aa)). Disulfide bonds link C861–C926, C874–C906, C875–C908, and C880–C890. Residues 896–913 (VYPFMWGGAYCFCDTENT) are E1 fusion peptide loop. N946 carries an N-linked (GlcNAc...) asparagine; by host glycan. Intrachain disulfides connect C1071/C1083, C1113/C1188, C1118/C1192, and C1140/C1182. A helical membrane pass occupies residues 1225 to 1245 (LLGGSAVIIIIGLVLATIVAM). Residues 1246–1254 (YVLTNQKHN) lie on the Cytoplasmic side of the membrane.

As to quaternary structure, homodimer. Homomultimer. Interacts with host karyopherin KPNA4; this interaction allows the nuclear import of the viral capsid protein. Interacts with spike glycoprotein E2. Interacts with host IRAK1; the interaction leads to inhibition of IRAK1-dependent signaling. Part of a tetrameric complex composed of host CRM1, host importin alpha/beta dimer and the viral capsid; this complex blocks the receptor-mediated transport through the nuclear pore. Interacts with host phosphatase PPP1CA; this interaction dephosphorylates the capsid protein, which increases its ability to bind to the viral genome. In terms of assembly, the precursor of protein E3/E2 and E1 form a heterodimer shortly after synthesis. Interacts with spike glycoprotein E2. The precursor of protein E3/E2 and E1 form a heterodimer shortly after synthesis. Processing of the precursor of protein E3/E2 into E2 and E3 results in a heterodimer of the spike glycoproteins E2 and E1. Spike at virion surface are constituted of three E2-E1 heterodimers. After target cell attachment and endocytosis, E1 change conformation to form homotrimers. Interacts with 6K protein. Interacts with host LDLRAD3; this interaction mediates viral entry to the host cell. As to quaternary structure, interacts with spike glycoprotein E1. Processing of the precursor of protein E3/E2 into E2 and E3 results in a heterodimer of the spike glycoproteins E2 and E1. Spike at virion surface are constituted of a trimer of E2-E1 heterodimers. Interacts with 6K protein. Interacts with host LDLRAD3; this interaction mediates viral entry to the host cell. In terms of assembly, oligomer. Interacts with spike glycoprotein E1. Interacts with spike glycoprotein E2. Post-translationally, structural polyprotein: Specific enzymatic cleavages in vivo yield mature proteins. Capsid protein is auto-cleaved during polyprotein translation, unmasking a signal peptide at the N-terminus of the precursor of E3/E2. The remaining polyprotein is then targeted to the host endoplasmic reticulum, where host signal peptidase cleaves it into pE2, 6K and E1 proteins. pE2 is further processed to mature E3 and E2 by host furin in trans-Golgi vesicle. Palmitoylated via thioester bonds. These palmitoylations may induce disruption of the C-terminus transmembrane. This would result in the reorientation of E2 C-terminus from lumenal to cytoplasmic side. In terms of processing, phosphorylated on serine and threonine residues. Post-translationally, N-glycosylated. Palmitoylated via thioester bonds.

It is found in the virion. It localises to the host cytoplasm. Its subcellular location is the host cell membrane. The protein localises to the host nucleus. The protein resides in the virion membrane. The catalysed reaction is Autocatalytic release of the core protein from the N-terminus of the togavirus structural polyprotein by hydrolysis of a -Trp-|-Ser- bond.. In terms of biological role, forms an icosahedral capsid with a T=4 symmetry composed of 240 copies of the capsid protein surrounded by a lipid membrane through which penetrate 80 spikes composed of trimers of E1-E2 heterodimers. The capsid protein binds to the viral RNA genome at a site adjacent to a ribosome binding site for viral genome translation following genome release. Possesses a protease activity that results in its autocatalytic cleavage from the nascent structural protein. Following its self-cleavage, the capsid protein transiently associates with ribosomes, and within several minutes the protein binds to viral RNA and rapidly assembles into icosahedric core particles. The resulting nucleocapsid eventually associates with the cytoplasmic domain of the spike glycoprotein E2 at the cell membrane, leading to budding and formation of mature virions. In case of infection, new virions attach to target cells and after clathrin-mediated endocytosis their membrane fuses with the host endosomal membrane. This leads to the release of the nucleocapsid into the cytoplasm, followed by an uncoating event necessary for the genomic RNA to become accessible. The uncoating might be triggered by the interaction of capsid proteins with ribosomes. Binding of ribosomes would release the genomic RNA since the same region is genomic RNA-binding and ribosome-binding. Specifically inhibits interleukin-1 receptor-associated kinase 1/IRAK1-dependent signaling during viral entry, representing a means by which the alphaviruses may evade innate immune detection and activation prior to viral gene expression. Inhibits host transcription. Forms a tetrameric complex with XPO1/CRM1 and the nuclear import receptor importin. This complex blocks the central channel of host nuclear pores thereby inhibiting the receptor-mediated nuclear transport and thus the host mRNA and rRNA transcription. The inhibition of transcription is linked to a cytopathic effect on the host cell. Provides the signal sequence for the translocation of the precursor of protein E3/E2 to the host endoplasmic reticulum. Furin-cleaved E3 remains associated with spike glycoprotein E1 and mediates pH protection of the latter during the transport via the secretory pathway. After virion release from the host cell, the assembly protein E3 is gradually released in the extracellular space. Its function is as follows. Plays a role in viral attachment to target host cell, by binding to the cell receptor LDLRAD3. Synthesized as a p62 precursor which is processed by furin at the cell membrane just before virion budding, giving rise to E2-E1 heterodimer. The p62-E1 heterodimer is stable, whereas E2-E1 is unstable and dissociate at low pH. p62 is processed at the last step, presumably to avoid E1 fusion activation before its final export to cell surface. E2 C-terminus contains a transitory transmembrane that would be disrupted by palmitoylation, resulting in reorientation of the C-terminal tail from lumenal to cytoplasmic side. This step is critical since E2 C-terminus is involved in budding by interacting with capsid proteins. This release of E2 C-terminus in cytoplasm occurs lately in protein export, and precludes premature assembly of particles at the endoplasmic reticulum membrane. Functionally, acts as a viroporin that participates in virus glycoprotein processing and transport to the plasma membrane, cell permeabilization and budding of viral particles. Disrupts the calcium homeostasis of the cell, probably at the endoplasmic reticulum level. This leads to cytoplasmic calcium elevation. Because of its lipophilic properties, the 6K protein is postulated to influence the selection of lipids that interact with the transmembrane domains of the glycoproteins, which, in turn, affects the deformability of the bilayer required for the extreme curvature that occurs as budding proceeds. Present in low amount in virions, about 3% compared to viral glycoproteins. In terms of biological role, class II viral fusion protein. Fusion activity is inactive as long as E1 is bound to E2 in mature virion. After virus attachment to cell receptor LDLRAD3 and endocytosis, acidification of the endosome would induce dissociation of E1/E2 heterodimer and concomitant trimerization of the E1 subunits. This E1 trimer is fusion active, and promotes release of viral nucleocapsid in cytoplasm after endosome and viral membrane fusion. Efficient fusion requires the presence of cholesterol and sphingolipid in the target membrane. Fusion is optimal at levels of about 1 molecule of cholesterol per 2 molecules of phospholipids, and is specific for sterols containing a 3-beta-hydroxyl group. The polypeptide is Structural polyprotein (Bos taurus (Bovine)).